We begin with the raw amino-acid sequence, 127 residues long: MNIIEQIEKEEIARLTANKTIPAFAPGDTVIVNVNVVEGNRKRVQAYEGVVIAKRNRGLNSSFIVRKISSGEGVERTFQLYSPLIAGIEVKRRGDVRRAKLYYLRERSGKSARIKEKLVSKAAKAAQ.

Belongs to the bacterial ribosomal protein bL19 family.

In terms of biological role, this protein is located at the 30S-50S ribosomal subunit interface and may play a role in the structure and function of the aminoacyl-tRNA binding site. In Cupriavidus pinatubonensis (strain JMP 134 / LMG 1197) (Cupriavidus necator (strain JMP 134)), this protein is Large ribosomal subunit protein bL19.